The chain runs to 414 residues: Nucleoporin NUP42 (414 aa).

The C3H1-type zinc finger occupies 1–25 (MPVCNFFLQGRCRYGDTCWNEHPTG). 2 disordered regions span residues 24–73 (TGGR…RGAA) and 200–221 (PPAS…TSGF). FG repeat units lie at residues 43 to 44 (FG), 207 to 208 (FG), 214 to 215 (FG), 221 to 222 (FG), 233 to 234 (FG), 238 to 239 (FG), 257 to 258 (FG), 268 to 269 (FG), 280 to 281 (FG), 306 to 307 (FG), 325 to 326 (FG), 329 to 330 (FG), 335 to 336 (FG), 341 to 342 (FG), 347 to 348 (FG), 351 to 352 (FG), and 362 to 363 (FG).

In terms of assembly, probable component of the nuclear pore complex (NPC).

It is found in the nucleus. Its subcellular location is the nuclear pore complex. The protein localises to the nucleus membrane. Functionally, required for the export of mRNAs containing poly(A) tails from the nucleus into the cytoplasm. In Danio rerio (Zebrafish), this protein is Nucleoporin NUP42 (nup42).